The following is a 1715-amino-acid chain: Sodium channel protein type 4 subunit alpha B (1715 aa).

Residues 1–126 (MGTLLPPVGS…IFAIKILVHS (126 aa)) lie on the Cytoplasmic side of the membrane. One copy of the I repeat lies at 108–431 (LLSPFNSMRI…VVAMAYAEQN (324 aa)). A helical transmembrane segment spans residues 127 to 145 (LFSLFIMATILTNCVFMTL). The Extracellular portion of the chain corresponds to 146–152 (SDPPAWS). The chain crosses the membrane as a helical span at residues 153 to 173 (KTVEYVFTFIYTFEATIKVVS). Residues 174–187 (RGFCVGQFTFLKDP) are Cytoplasmic-facing. A helical transmembrane segment spans residues 188 to 205 (WNWLDFMVISMAYLTELV). Residues 206-211 (DLGNVS) lie on the Extracellular side of the membrane. The N-linked (GlcNAc...) asparagine glycan is linked to Asn-209. A helical membrane pass occupies residues 212–228 (VLRTFRVLRALKTITVI). The Cytoplasmic portion of the chain corresponds to 229–247 (PGLKTIVGALIQSVKKLAD). Residues 248-267 (AMVLTVFCLSVFALIGLQLF) form a helical membrane-spanning segment. Residues 268–368 (MGNLRQKCVL…PNYGYTSYDS (101 aa)) are Extracellular-facing. An intrachain disulfide couples Cys-275 to Cys-337. Asn-284, Asn-304, and Asn-339 each carry an N-linked (GlcNAc...) asparagine glycan. Cys-346 and Cys-352 are joined by a disulfide. An intramembrane region (pore-forming) is located at residues 369–393 (FGWAFLALFRLMTQDFWENLFQLTL). The Extracellular portion of the chain corresponds to 394-400 (RAAGKTY). A helical membrane pass occupies residues 401–421 (MIFFVVVIFLGSFYLINLILA). Residues 422-515 (VVAMAYAEQN…RCLSAIVMDP (94 aa)) are Cytoplasmic-facing. Residues 497–768 (CCSCWRHLKR…QIAVNRIKRA (272 aa)) form an II repeat. The chain crosses the membrane as a helical span at residues 516–534 (FVDLGITICIILNTIFMAM). Residues 535 to 545 (EHYPMSADFEE) lie on the Extracellular side of the membrane. The chain crosses the membrane as a helical span at residues 546–565 (LLSVGNLVFTGIFTCEMVLK). Topologically, residues 566 to 579 (ILAMDPYFYFQVGW) are cytoplasmic. Residues 580–599 (NIFDSIIVTMSLVELGLANV) traverse the membrane as a helical segment. Over 600 to 601 (QG) the chain is Extracellular. Residues 602–619 (LSVLRSFRLMRVFKLAKS) form a helical membrane-spanning segment. Over 620–635 (WPTLNMLIKIIGNSVG) the chain is Cytoplasmic. The chain crosses the membrane as a helical span at residues 636–654 (ALGNLTLVLAIIVFIFAVV). Over 655–683 (GMQLFGKNYKDCVCRISEDCKLPRWHMND) the chain is Extracellular. Cys-668 and Cys-674 are disulfide-bonded. The pore-forming intramembrane region spans 684–704 (FFHAFLIIFRVLCGEWIDTMW). The Extracellular segment spans residues 705–715 (DCMEVSGQTMC). Residues Cys-706 and Cys-715 are joined by a disulfide bond. The helical transmembrane segment at 716–734 (LIVYMMVLVIGNLVVLNLF) threads the bilayer. Over 735-915 (LALLLSSFSG…ACFIIVENNY (181 aa)) the chain is Cytoplasmic. A disordered region spans residues 824–865 (EAESDSEDSDDDDVDEDKHSRCDESSFCSTVQDPEVKENEAD). Residues 825–838 (AESDSEDSDDDDVD) show a composition bias toward acidic residues. The stretch at 896-1211 (KGKVWCNIRR…KKYYNAMKKL (316 aa)) is one III repeat. Residues 916 to 933 (FESFIVFMILLSSGALAF) traverse the membrane as a helical segment. Topologically, residues 934-946 (EDIYLEKHQLIKT) are extracellular. Residues 947-965 (ILEYADKVFTYVFVVEMVL) traverse the membrane as a helical segment. The Cytoplasmic segment spans residues 966-979 (KWFAYGFKSYFSNA). A helical membrane pass occupies residues 980 to 998 (WCWLDFLIVDVSLVSLTAN). Topologically, residues 999 to 1006 (ILGYSELG) are extracellular. A helical transmembrane segment spans residues 1007–1025 (AIKSLRTLRALRPLRALSR). At 1026–1042 (FEGMRVVVNALVGAVPS) the chain is on the cytoplasmic side. The helical transmembrane segment at 1043 to 1062 (IFNVLLVCLIFWLIFSIMGV) threads the bilayer. Residues 1063 to 1115 (NLFAGKFSYCFNETSQEQFDKKIVNNKTECIALIEANFTEVRWKNLKVNYDNV) lie on the Extracellular side of the membrane. The cysteines at positions 1072 and 1092 are disulfide-linked. N-linked (GlcNAc...) asparagine glycosylation is found at Asn-1074 and Asn-1088. The segment at residues 1116-1137 (GIGYLSLLQVATFKGWMEIMYA) is an intramembrane region (pore-forming). Residues 1138-1154 (AVDSRDVESQPIYEVNI) are Extracellular-facing. The chain crosses the membrane as a helical span at residues 1155–1176 (YMYLYFVIFIIFGSFFTLNLFI). The Cytoplasmic segment spans residues 1177–1239 (GVIIDNFNQQ…LVFDLVTKQI (63 aa)). Residues 1195–1197 (IFM) are important for rapid channel inactivation. Residues 1220–1517 (VPRPENALQG…WEKFDPDATQ (298 aa)) form an IV repeat. Residues 1240-1257 (FDVFIMVLICLNMVTMMV) form a helical membrane-spanning segment. Topologically, residues 1258 to 1268 (ETDEQTKEKED) are extracellular. The helical transmembrane segment at 1269–1287 (ILYWINVIFIVIFTTECIL) threads the bilayer. Over 1288 to 1299 (KTIALRRHYFSI) the chain is Cytoplasmic. Residues 1300–1317 (GWNVFDFVVVILSILGLL) form a helical membrane-spanning segment. Topologically, residues 1318–1330 (LADIIEKYFVSPT) are extracellular. A helical membrane pass occupies residues 1331 to 1347 (LFRVIRLARIGRVLRLI). Residues 1348 to 1366 (RGAKGIRTLLFALMMSLPA) are Cytoplasmic-facing. A helical transmembrane segment spans residues 1367-1384 (LFNIGLLLFLIMFIFSIF). At 1385–1406 (GMSNFAYVKKEAMIDDMFNFET) the chain is on the extracellular side. Positions 1407–1429 (FGNSMICLFMITTSAGWDGLLSP) form an intramembrane region, pore-forming. The Extracellular segment spans residues 1430–1458 (IMNKPPDCDPDLENPGTTVRGNCGSPAIG). An intrachain disulfide couples Cys-1437 to Cys-1452. Residues 1459–1481 (IVFFSTYIIMSFLVVVNMYIAII) form a helical membrane-spanning segment. Over 1482 to 1715 (LENFNVATEE…LGTSERESLV (234 aa)) the chain is Cytoplasmic. The IQ domain occupies 1611-1640 (EEVAARVIQRAYRKYLLQRTVRLASFTYRE).

Belongs to the sodium channel (TC 1.A.1.10) family. Nav1.4/SCN4A subfamily. In terms of assembly, voltage-gated sodium (Nav) channels consist of an ion-conducting alpha subunit which is functional on its own associated with regulatory beta subunits.

It is found in the cell membrane. It carries out the reaction Na(+)(in) = Na(+)(out). Pore-forming subunit of a voltage-gated sodium (Nav) channel that directly mediates the depolarizing phase of action potentials in excitable membranes. Navs, also called VGSCs (voltage-gated sodium channels) or VDSCs (voltage-dependent sodium channels), operate by switching between closed and open conformations depending on the voltage difference across the membrane. In the open conformation they allow Na(+) ions to selectively pass through the pore, along their electrochemical gradient. The influx of Na+ ions provokes membrane depolarization, initiating the propagation of electrical signals throughout cells and tissues. The protein is Sodium channel protein type 4 subunit alpha B (scn4ab) of Tetraodon nigroviridis (Spotted green pufferfish).